The sequence spans 552 residues: Putative transport protein APJL_0985 (552 aa).

Transmembrane regions (helical) follow at residues 4–24 (IAIIVSLLSLVAVLGLWIGHI), 29–49 (VGLGIGGVLFGGIIISHCTHL), 65–85 (FGLILFVYSIGIQVGPGFFAS), 95–115 (GFAVMIVGLSGILVALIHKLF), and 161–181 (IAYPFGIIGILLSMWLIRIIF). 2 consecutive RCK C-terminal domains span residues 190-275 (QEFD…ILGE) and 277-360 (ADVS…IIGD). The next 6 membrane-spanning stretches (helical) occupy residues 370–390 (MLPIFLGIGLGVLLGSLPLYL), 403–425 (GGPLVVALILARIGSIGKLYWFM), 438–458 (IVLFLSVVGLKAGANFLDTLL), 463–483 (LAWMGYGAIITFIPLIVTGFV), 492–512 (YLSLCGLLSGAMTDPPALAFA), and 529–549 (VYPLVMFLRIILPQLLAILLW).

It belongs to the AAE transporter (TC 2.A.81) family. YidE subfamily.

The protein localises to the cell membrane. In Actinobacillus pleuropneumoniae serotype 3 (strain JL03), this protein is Putative transport protein APJL_0985.